The sequence spans 805 residues: MSGSSWLLLSLVAVTAAQSTIEEQAKTFLDKFNHEAEDLFYQSSLASWNYNTNITEENVQNMNNAGDKWSAFLKEQSTLAQMYPLQEIQNLTVKLQLQALQQNGSSVLSEDKSKRLNTILNTMSTIYSTGKVCNPNNPQECLLLEPGLNEIMANSLDYNERLWAWESWRSEVGKQLRPLYEEYVVLKNEMARANHYEDYGDYWRGDYEVNGVDSYDYSRGQLIEDVEHTFEEIKPLYEHLHAYVRAKLINAYPSYISPIGCLPAHLLGDMWGRFWTNLYSLTVPFGQKPNIDVTDAMVDQAWDAQRIFKEAEKFFVSVGLPNMTQRFWENSMLTDPGNVQKVVCHPTAWDLGKGDFRILMCTKVTMDDFLTAHHEMGHIQYDMAYAAQPFLLRNGANEGFHEAVGEIMSLSAATPKHLKSIGLLSPDFQEDNETEINFLLKQALTIVGTLPFTYMLEKWRWMVFKGEIPKDQWMKKWWEMKREIVGVVEPVPHDETYCDPASLFHVSNDYSFIRYYTRTLYQFQFQEALCQAAKHEGPLHKCDISNSTEAGQKLLNMLRLGKSEPWTLALENVVGAKNMNVRPLLDYFEPLFTWLKDQNKNSFVGWSTDWSPYADQSIKVRISLKSALGNKAYEWNDNEIYLFRSSVAYAMRKYFLEVKNQMILFGEEDVRVANLKPRISFNFFVTAPKNVSDIIPRTEVEKAIRMSRSRINDAFRLNDNSLEFLGIQPTLGPPNQPPVSIWLIVFGVVMGVIVVGIVVLIFTGIRDRKKKNKARNEENPYASIDISKGENNPGFQNTDDVQTSF.

A signal peptide spans 1-17; sequence MSGSSWLLLSLVAVTAA. Topologically, residues 18-740 are extracellular; the sequence is QSTIEEQAKT…LGPPNQPPVS (723 aa). One can recognise a Peptidase M2 domain in the interval 19–607; the sequence is STIEEQAKTF…QNKNSFVGWS (589 aa). N-linked (GlcNAc...) asparagine glycans are attached at residues asparagine 53, asparagine 90, and asparagine 103. Cysteines 133 and 141 form a disulfide. Arginine 169 contributes to the chloride binding site. Residue arginine 273 coordinates substrate. N-linked (GlcNAc...) asparagine glycosylation occurs at asparagine 322. Cysteine 344 and cysteine 361 are joined by a disulfide. Residue 345-346 coordinates substrate; sequence HP. Residue histidine 374 coordinates Zn(2+). Catalysis depends on glutamate 375, which acts as the Proton acceptor. Residues histidine 378 and glutamate 402 each coordinate Zn(2+). N-linked (GlcNAc...) asparagine glycosylation occurs at asparagine 432. Residues tryptophan 477 and lysine 481 each contribute to the chloride site. Histidine 505 acts as the Proton donor in catalysis. Substrate is bound at residue tyrosine 515. Residues cysteine 530 and cysteine 542 are joined by a disulfide bond. Residue asparagine 546 is glycosylated (N-linked (GlcNAc...) asparagine). A Collectrin-like domain is found at 614–805; sequence ADQSIKVRIS…QNTDDVQTSF (192 aa). The segment at 652–659 is essential for cleavage by ADAM17; it reads RKYFLEVK. Residue asparagine 690 is glycosylated (N-linked (GlcNAc...) asparagine). Residues 697–716 are essential for cleavage by TMPRSS11D and TMPRSS2; the sequence is RTEVEKAIRMSRSRINDAFR. A helical membrane pass occupies residues 741–761; the sequence is IWLIVFGVVMGVIVVGIVVLI. Topologically, residues 762–805 are cytoplasmic; sequence FTGIRDRKKKNKARNEENPYASIDISKGENNPGFQNTDDVQTSF. The interval 772 to 805 is disordered; it reads NKARNEENPYASIDISKGENNPGFQNTDDVQTSF. The LIR signature appears at 778–786; that stretch reads ENPYASIDI. At tyrosine 781 the chain carries Phosphotyrosine. Positions 781–784 match the Endocytic sorting signal motif; sequence YASI. Residues 781–785 carry the SH2-binding motif; the sequence is YASID. Serine 783 bears the Phosphoserine mark. Residue lysine 788 forms a Glycyl lysine isopeptide (Lys-Gly) (interchain with G-Cter in ubiquitin) linkage. The segment covering 789-805 has biased composition (polar residues); it reads GENNPGFQNTDDVQTSF. Residues 792-795 carry the PTB motif; it reads NPGF. Positions 803 to 805 match the PDZ-binding motif; sequence TSF.

This sequence belongs to the peptidase M2 family. Homodimer. Interacts with the catalytically active form of TMPRSS2. Interacts with SLC6A19; this interaction is essential for expression and function of SLC6A19 in intestine. Interacts with ITGA5:ITGB1. Probably interacts (via endocytic sorting signal motif) with AP2M1; the interaction is inhibited by phosphorylation of Tyr-781. Interacts (via PDZ-binding motif) with NHERF1 (via PDZ domains); the interaction may enhance ACE2 membrane residence. Requires Zn(2+) as cofactor. Chloride serves as cofactor. Post-translationally, proteolytic cleavage by ADAM17 generates a secreted form. Also cleaved by serine proteases: TMPRSS2, TMPRSS11D and HPN/TMPRSS1. In terms of processing, phosphorylated. Phosphorylation at Tyr-781 probably inhibits interaction with AP2M1 and enables interactions with proteins containing SH2 domains. Ubiquitinated. Ubiquitinated on Lys-788 via 'Lys-48'-linked ubiquitin. 'Lys-48'-linked deubiquitinated by USP50 on the Lys-788; leading to its stabilization.

The protein localises to the secreted. Its subcellular location is the cell membrane. It is found in the cytoplasm. The protein resides in the cell projection. It localises to the cilium. The protein localises to the apical cell membrane. It catalyses the reaction angiotensin II + H2O = angiotensin-(1-7) + L-phenylalanine. It carries out the reaction angiotensin I + H2O = angiotensin-(1-9) + L-leucine. The catalysed reaction is bradykinin(1-8) + H2O = bradykinin(1-7) + L-phenylalanine. The enzyme catalyses neurotensin + H2O = neurotensin-(1-12) + L-leucine. It catalyses the reaction kinetensin + H2O = kinetensin-(1-8) + L-leucine. It carries out the reaction dynorphin A-(1-13) + H2O = dynorphin A-(1-12) + L-lysine. The catalysed reaction is apelin-13 + H2O = apelin-12 + L-phenylalanine. The enzyme catalyses [Pyr1]apelin-13 + H2O = [Pyr1]apelin-12 + L-phenylalanine. It catalyses the reaction apelin-17 + H2O = apelin-16 + L-phenylalanine. Essential counter-regulatory carboxypeptidase of the renin-angiotensin hormone system that is a critical regulator of blood volume, systemic vascular resistance, and thus cardiovascular homeostasis. Converts angiotensin I to angiotensin 1-9, a nine-amino acid peptide with anti-hypertrophic effects in cardiomyocytes, and angiotensin II to angiotensin 1-7, which then acts as a beneficial vasodilator and anti-proliferation agent, counterbalancing the actions of the vasoconstrictor angiotensin II. Also removes the C-terminal residue from three other vasoactive peptides, neurotensin, kinetensin, and des-Arg bradykinin, but is not active on bradykinin. Also cleaves other biological peptides, such as apelins, casomorphins and dynorphin A. Plays an important role in amino acid transport by acting as binding partner of amino acid transporter SLC6A19 in intestine, regulating trafficking, expression on the cell surface, and its catalytic activity. The chain is Angiotensin-converting enzyme 2 (ACE2) from Pongo abelii (Sumatran orangutan).